The primary structure comprises 359 residues: Pheromone receptor 1 (359 aa).

The next 7 membrane-spanning stretches (helical) occupy residues Val5–Ile25, Ile33–Trp53, Leu71–Ala87, Ile110–Val130, Phe147–Phe167, Leu206–Ser226, and Leu268–Leu288. The interval Thr335–Ala359 is disordered. Residues Phe348–Ala359 are compositionally biased toward polar residues.

The protein belongs to the G-protein coupled receptor 4 family.

Its subcellular location is the membrane. In terms of biological role, receptor for the A2 pheromone, a prenylated mating factor. The polypeptide is Pheromone receptor 1 (PRA1) (Ustilago hordei (Barley covered smut fungus)).